Reading from the N-terminus, the 974-residue chain is MTAASPWSVKGIDPKAREVAKDLARRSGMTLGEWLNRMIIEGDGQTADPRLAGDDVPNRAYLEIVKDDAPPRIEIAEHPADEVGRVALALDRLTQRIEAAEGRNAAAITGIDHSVRDALTRLGASEREQIAVAARFEGAVDELKTEQARATERLRRIESEAAGPRSAEALRALEGALGKVAGHLYEGEARTREAIATLEAKLNQQSSGDPSALVEAVVARLGERLEAAETRTSDALRELGASFQALDQRLGAVETANPATGVQEGLDSLAATLTQKMEAARLEMAAKLRESADGRFDRMERKLGEMAAHVQAAEQRSAQAIERMGREIVGVADAFNRRVHAAESRNASAIEQVGGEVARIAASVEHKLNRADSVQAQALEKLGGEIARITEKLAERIGSAERRNALAIDDVGEQVARVTERLNQRHERSSQELVDRIRQSEERTLRMLEEAREKIDSRLSEAQRKLEAAPPSPPPAQAPAPVATAQRPVPPAASPFEDNYFSQAASFSTSEDEADAFDAPPAPARSFEVAEFPAAEPEEPAFAHDDYAIADGFEPESPRYEVEPEVSDFAPAEPSRPMSTRDIIEQARAAARAAAASEGKGGKAKSAKKEKASKASGSLFSGFGGFSTKKSKARLGATVTTALVVFAAAGALGAGVGGLLLLNTDDGNNSPSRVAQAIAGRKADVEVNGPEADTTPGAPRAAVALTTGKVVPAEVEAPAAPPTNEAKALFEDAVRKIESGDRSGVELLKRAANGGYPAAQFYLSKMYEGGKNGVKVDMAEARRWSERAANGGDPRAMHNLALYYFKGEGGPRNSTTAASWFRKAADMGLVDSQFNLAQLYESGLGVSQNPAEAYKWYVIAGRAGDSTARGRATALRSQLTAEAQQTADRSALAFRPQTQVQTASLSSAAPAAANANLGVAQRVLSQLGYYQGPRDGVSSPALRMAIAAYQRDQGLPPTGSVDAETLNRLSVYAR.

Coiled-coil stretches lie at residues 81–163 (DEVG…EAAG), 218–320 (VARL…SAQA), and 375–469 (QAQA…LEAA). 2 disordered regions span residues 460 to 497 (SEAQ…SPFE) and 589 to 611 (AAAR…KKEK). A compositionally biased stretch (low complexity) spans 589–598 (AAARAAAASE). A helical membrane pass occupies residues 642-662 (ALVVFAAAGALGAGVGGLLLL). Sel1-like repeat units follow at residues 757–793 (PAAQ…NGGD), 794–829 (PRAM…DMGL), and 830–865 (VDSQ…RAGD).

Post-translationally, two isoforms exist, the full-length translation product PodJL and a C-terminal truncated form PodJS. Both appear during a specific time period of the cell cycle to control different aspects of polar organelle development.

The protein resides in the membrane. Functionally, podJL provides the positional information for the localization of several polar organelles (pili, adhesive holdfast and chemotactic apparatus) by recruiting structural (CpaE) and regulatory (PleC) proteins to a specific cell pole. This is Localization factor PodJL (podJ) from Caulobacter vibrioides (strain ATCC 19089 / CIP 103742 / CB 15) (Caulobacter crescentus).